The following is a 33-amino-acid chain: Large ribosomal subunit protein uL24 (33 aa).

This sequence belongs to the universal ribosomal protein uL24 family. Component of the large ribosomal subunit.

It localises to the cytoplasm. Component of the large ribosomal subunit. The ribosome is a large ribonucleoprotein complex responsible for the synthesis of proteins in the cell. This Xenopus laevis (African clawed frog) protein is Large ribosomal subunit protein uL24 (rpl26).